Reading from the N-terminus, the 374-residue chain is CC-adding tRNA nucleotidyltransferase (374 aa).

Position 39–42 (39–42 (GAVR)) interacts with CTP. Positions 52 and 54 each coordinate Mg(2+). CTP contacts are provided by residues 126–127 (RD), N131, 171–180 (DASRLVRAAR), and R209.

Belongs to the tRNA nucleotidyltransferase/poly(A) polymerase family. It depends on Mg(2+) as a cofactor.

The enzyme catalyses a tRNA precursor + 2 CTP = a tRNA with a 3' CC end + 2 diphosphate. Its function is as follows. tRNA nucleotidyltransferase involved in the synthesis of the tRNA CCA terminus. Adds the two cytidine residues to tRNA. The chain is CC-adding tRNA nucleotidyltransferase from Deinococcus radiodurans (strain ATCC 13939 / DSM 20539 / JCM 16871 / CCUG 27074 / LMG 4051 / NBRC 15346 / NCIMB 9279 / VKM B-1422 / R1).